The following is a 427-amino-acid chain: Glutamyl-tRNA reductase (427 aa).

Substrate is bound by residues 49-52 (TCNR), Ser-105, 110-112 (EPQ), and Gln-116. Cys-50 (nucleophile) is an active-site residue. Residue 185-190 (AAGEMN) participates in NADP(+) binding.

Belongs to the glutamyl-tRNA reductase family. Homodimer.

The catalysed reaction is (S)-4-amino-5-oxopentanoate + tRNA(Glu) + NADP(+) = L-glutamyl-tRNA(Glu) + NADPH + H(+). The protein operates within porphyrin-containing compound metabolism; protoporphyrin-IX biosynthesis; 5-aminolevulinate from L-glutamyl-tRNA(Glu): step 1/2. Its function is as follows. Catalyzes the NADPH-dependent reduction of glutamyl-tRNA(Glu) to glutamate 1-semialdehyde (GSA). The polypeptide is Glutamyl-tRNA reductase (Acinetobacter baumannii (strain AB307-0294)).